Here is a 94-residue protein sequence, read N- to C-terminus: Large ribosomal subunit protein uL23 (94 aa).

Belongs to the universal ribosomal protein uL23 family. Part of the 50S ribosomal subunit. Contacts protein L29, and trigger factor when it is bound to the ribosome.

One of the early assembly proteins it binds 23S rRNA. One of the proteins that surrounds the polypeptide exit tunnel on the outside of the ribosome. Forms the main docking site for trigger factor binding to the ribosome. This is Large ribosomal subunit protein uL23 from Latilactobacillus sakei subsp. sakei (strain 23K) (Lactobacillus sakei subsp. sakei).